We begin with the raw amino-acid sequence, 268 residues long: Formamidopyrimidine-DNA glycosylase (268 aa).

P2 (schiff-base intermediate with DNA) is an active-site residue. E3 (proton donor) is an active-site residue. K56 acts as the Proton donor; for beta-elimination activity in catalysis. Residues H91, R110, and R149 each coordinate DNA. The FPG-type zinc-finger motif lies at 234 to 268 (QVYGRFNQACPNCGQPLKRSRIGGRSSHYCEKCQQ). The active-site Proton donor; for delta-elimination activity is the R258.

Belongs to the FPG family. As to quaternary structure, monomer. The cofactor is Zn(2+).

The catalysed reaction is Hydrolysis of DNA containing ring-opened 7-methylguanine residues, releasing 2,6-diamino-4-hydroxy-5-(N-methyl)formamidopyrimidine.. It carries out the reaction 2'-deoxyribonucleotide-(2'-deoxyribose 5'-phosphate)-2'-deoxyribonucleotide-DNA = a 3'-end 2'-deoxyribonucleotide-(2,3-dehydro-2,3-deoxyribose 5'-phosphate)-DNA + a 5'-end 5'-phospho-2'-deoxyribonucleoside-DNA + H(+). In terms of biological role, involved in base excision repair of DNA damaged by oxidation or by mutagenic agents. Acts as a DNA glycosylase that recognizes and removes damaged bases. Has a preference for oxidized purines, such as 7,8-dihydro-8-oxoguanine (8-oxoG). Has AP (apurinic/apyrimidinic) lyase activity and introduces nicks in the DNA strand. Cleaves the DNA backbone by beta-delta elimination to generate a single-strand break at the site of the removed base with both 3'- and 5'-phosphates. This is Formamidopyrimidine-DNA glycosylase from Syntrophomonas wolfei subsp. wolfei (strain DSM 2245B / Goettingen).